Here is a 2380-residue protein sequence, read N- to C-terminus: DNA polymerase epsilon catalytic subunit A (2380 aa).

Over residues 169 to 196 (YYNKGNNNNNNHQNYNNNNNQNNNNFNK) the composition is skewed to low complexity. 5 disordered regions span residues 169-209 (YYNK…NNSK), 1178-1210 (FFEK…QQTD), 1766-1787 (KNTS…NDTT), 1967-1998 (QQQQ…KNKK), and 2059-2120 (KIST…TTTS). Acidic residues predominate over residues 1183 to 1201 (EDNDQDNDNDNDNDNDNDN). A compositionally biased stretch (low complexity) spans 1767-1776 (NTSNNSNTKN). Over residues 1777–1787 (GANQNTTNDTT) the composition is skewed to polar residues. A compositionally biased stretch (acidic residues) spans 1975-1991 (NADDDDDDDVSENEEEQ). Low complexity-rich tracts occupy residues 2059-2081 (KIST…TTKD) and 2110-2120 (SSSSSTTTTTS). Zn(2+) is bound by residues cysteine 2225 and cysteine 2228. Residues 2225 to 2288 (CSSCHSCRDI…RVPELSCIQC (64 aa)) form a CysA-type zinc finger. Positions 2245–2258 (ISSRLSSQQKSNNN) are enriched in low complexity. Residues 2245–2275 (ISSRLSSQQKSNNNDSDDSDDDNEENEGDDD) form a disordered region. The span at 2259-2275 (DSDDSDDDNEENEGDDD) shows a compositional bias: acidic residues. Residues cysteine 2285 and cysteine 2288 each coordinate Zn(2+). 4 residues coordinate [4Fe-4S] cluster: cysteine 2319, cysteine 2322, cysteine 2334, and cysteine 2337. A CysB motif motif is present at residues 2319–2337 (CSKCNDVKSDNLGDICPQC).

This sequence belongs to the DNA polymerase type-B family. Consists of three subunits: pole, pole2 and pole3. The cofactor is [4Fe-4S] cluster.

The protein resides in the nucleus. It catalyses the reaction DNA(n) + a 2'-deoxyribonucleoside 5'-triphosphate = DNA(n+1) + diphosphate. DNA polymerase II participates in chromosomal DNA replication. This Dictyostelium discoideum (Social amoeba) protein is DNA polymerase epsilon catalytic subunit A (pole).